A 127-amino-acid chain; its full sequence is Multiple antibiotic resistance protein MarA (127 aa).

One can recognise an HTH araC/xylS-type domain in the interval 12–110 (HSILDWIEDN…DVPPHKYRMT (99 aa)). DNA-binding regions (H-T-H motif) lie at residues 29 to 50 (EKVSERSGYSKWHLQRMFKKET) and 77 to 100 (ILYLAERYGFESQQTLTRTFKNYF).

In terms of assembly, monomer.

May be a transcriptional activator of genes involved in the multiple antibiotic resistance (Mar) phenotype. It can also activate genes such as sodA, zwf and micF. The polypeptide is Multiple antibiotic resistance protein MarA (marA) (Escherichia coli (strain K12)).